Reading from the N-terminus, the 1426-residue chain is ABC transporter G family member 31 (1426 aa).

The region spanning 142–415 (LRHLRIYRGG…FAGMGFRCPE (274 aa)) is the ABC transporter 1 domain. 175–182 (GPPSSGKT) is an ATP binding site. Residues 493-706 (ELLKSNFQWQ…AQNAISVNEF (214 aa)) form the ABC transmembrane type-2 1 domain. A run of 7 helical transmembrane segments spans residues 511–531 (FIYVFKFIQLLLVALITMTVF), 544–564 (GIIYLGALYFAIVMILFNGFT), 592–612 (LPSWLLSIPTSLIESGMWVLV), 630–650 (FLLLFFLHQTSLALFRVMASL), 655–675 (IVANTFGSFALLVVMILGGFI), 681–701 (IPAWWIWGYWISPMMYAQNAI), and 741–761 (IGVGALFGYAIVLNFLFTLFL). Positions 824-1076 (MCFKNINYYV…NLVEFFEAIP (253 aa)) constitute an ABC transporter 2 domain. An ATP-binding site is contributed by 869–876 (GVSGAGKT). In terms of domain architecture, ABC transmembrane type-2 2 spans 1149-1363 (AQYAACLWKQ…TLYGLLTSQF (215 aa)). 7 helical membrane-spanning segments follow: residues 1168-1188 (YTAVRFFYTVIISLMFGTICW), 1200-1220 (IFNAMGAMYAAVLFIGITNAT), 1245-1265 (LPFAFSLVTVEFPYILVQSLI), 1283-1303 (FLWYLFFMYFTLLYFTFYGMM), 1313-1333 (VAPIIAAPFYTLWNLFCGFMI), 1341-1363 (WWRWYYWANPVSWTLYGLLTSQF), and 1398-1418 (VVAGMVAGFCVLFAVVFALAI).

This sequence belongs to the ABC transporter superfamily. ABCG family. PDR (TC 3.A.1.205) subfamily.

It localises to the membrane. In terms of biological role, may be a general defense protein. The polypeptide is ABC transporter G family member 31 (Oryza sativa subsp. japonica (Rice)).